A 251-amino-acid chain; its full sequence is Osmotin-like protein (251 aa).

A signal peptide spans 1 to 21; sequence MSHLTTFLVFFLLAFVTYTYA. 8 disulfide bridges follow: cysteine 31-cysteine 226, cysteine 73-cysteine 83, cysteine 88-cysteine 94, cysteine 142-cysteine 214, cysteine 147-cysteine 197, cysteine 155-cysteine 165, cysteine 169-cysteine 178, and cysteine 179-cysteine 184. The N-linked (GlcNAc...) asparagine glycan is linked to asparagine 233.

This sequence belongs to the thaumatin family.

The sequence is that of Osmotin-like protein (OLPA) from Nicotiana tabacum (Common tobacco).